Here is a 261-residue protein sequence, read N- to C-terminus: Cytochrome c oxidase subunit 3 (261 aa).

Over 1-15 (MTHQTHAYHMVNPSP) the chain is Mitochondrial matrix. Residues 16–34 (WPLTGALSALLMTSGLIMW) traverse the membrane as a helical segment. The Mitochondrial intermembrane segment spans residues 35–40 (FHFNST). A helical membrane pass occupies residues 41–66 (TLLMLGLTTNMLTMYQWWRDVIREST). Residues 67 to 72 (FQGHHT) lie on the Mitochondrial matrix side of the membrane. Residues 73-105 (PNVQKGLRYGMILFIISEVLFFTGFFWAFYHSS) traverse the membrane as a helical segment. Topologically, residues 106-128 (LAPTPELGGCWPPTGIHPLNPLE) are mitochondrial intermembrane. The helical transmembrane segment at 129–152 (VPLLNTSVLLASGVSITWAHHSLM) threads the bilayer. Over 153 to 155 (EGN) the chain is Mitochondrial matrix. Residues 156–183 (RNHMLQALFITIALGVYFTLLQASEYYE) traverse the membrane as a helical segment. Topologically, residues 184–190 (APFTISD) are mitochondrial intermembrane. A helical membrane pass occupies residues 191 to 223 (GVYGSTFFVATGFHGLHVIIGSTFLIVCFFRQL). Topologically, residues 224–232 (KFHFTSNHH) are mitochondrial matrix. A helical transmembrane segment spans residues 233–256 (FGFEAAAWYWHFVDVVWLFLYVSI). At 257–261 (YWWGS) the chain is on the mitochondrial intermembrane side.

Belongs to the cytochrome c oxidase subunit 3 family. Component of the cytochrome c oxidase (complex IV, CIV), a multisubunit enzyme composed of 14 subunits. The complex is composed of a catalytic core of 3 subunits MT-CO1, MT-CO2 and MT-CO3, encoded in the mitochondrial DNA, and 11 supernumerary subunits COX4I, COX5A, COX5B, COX6A, COX6B, COX6C, COX7A, COX7B, COX7C, COX8 and NDUFA4, which are encoded in the nuclear genome. The complex exists as a monomer or a dimer and forms supercomplexes (SCs) in the inner mitochondrial membrane with NADH-ubiquinone oxidoreductase (complex I, CI) and ubiquinol-cytochrome c oxidoreductase (cytochrome b-c1 complex, complex III, CIII), resulting in different assemblies (supercomplex SCI(1)III(2)IV(1) and megacomplex MCI(2)III(2)IV(2)).

The protein resides in the mitochondrion inner membrane. It catalyses the reaction 4 Fe(II)-[cytochrome c] + O2 + 8 H(+)(in) = 4 Fe(III)-[cytochrome c] + 2 H2O + 4 H(+)(out). Functionally, component of the cytochrome c oxidase, the last enzyme in the mitochondrial electron transport chain which drives oxidative phosphorylation. The respiratory chain contains 3 multisubunit complexes succinate dehydrogenase (complex II, CII), ubiquinol-cytochrome c oxidoreductase (cytochrome b-c1 complex, complex III, CIII) and cytochrome c oxidase (complex IV, CIV), that cooperate to transfer electrons derived from NADH and succinate to molecular oxygen, creating an electrochemical gradient over the inner membrane that drives transmembrane transport and the ATP synthase. Cytochrome c oxidase is the component of the respiratory chain that catalyzes the reduction of oxygen to water. Electrons originating from reduced cytochrome c in the intermembrane space (IMS) are transferred via the dinuclear copper A center (CU(A)) of subunit 2 and heme A of subunit 1 to the active site in subunit 1, a binuclear center (BNC) formed by heme A3 and copper B (CU(B)). The BNC reduces molecular oxygen to 2 water molecules using 4 electrons from cytochrome c in the IMS and 4 protons from the mitochondrial matrix. The chain is Cytochrome c oxidase subunit 3 (MT-CO3) from Antilope cervicapra (Blackbuck).